Consider the following 266-residue polypeptide: MIALALPAQDSGEFTPPGINEMHLPAILPWGAAEGFSKQMLLVLLSVVFIAVFFVLAARKQQLVPGKLQFAGEAAYGFVRNGIAKDIIGGRDFIKYVPLLFSLFFFILVNNIYGAIPLIQLPTFSHVGGAYVLAGIVYFTWIAIGIKKNGLRYFKLATVPSGVPWFILPIVIPIEIISNFVVRPVTHSLRLFATMLAGHLIVMIAGSGIEYLVMQESILLKGTSVLVLAGAIAMYMLEALIMVLQAYVFTLLTAIYIEGALHADSH.

Transmembrane regions (helical) follow at residues 38-58, 99-119, 126-146, 162-182, 191-211, and 224-244; these read KQMLLVLLSVVFIAVFFVLAA, LLFSLFFFILVNNIYGAIPLI, HVGGAYVLAGIVYFTWIAIGI, GVPWFILPIVIPIEIISNFVV, LFATMLAGHLIVMIAGSGIEY, and SVLVLAGAIAMYMLEALIMVL.

The protein belongs to the ATPase A chain family. In terms of assembly, F-type ATPases have 2 components, CF(1) - the catalytic core - and CF(0) - the membrane proton channel. CF(1) has five subunits: alpha(3), beta(3), gamma(1), delta(1), epsilon(1). CF(0) has three main subunits: a(1), b(2) and c(9-12). The alpha and beta chains form an alternating ring which encloses part of the gamma chain. CF(1) is attached to CF(0) by a central stalk formed by the gamma and epsilon chains, while a peripheral stalk is formed by the delta and b chains.

It localises to the cell membrane. Functionally, key component of the proton channel; it plays a direct role in the translocation of protons across the membrane. The polypeptide is ATP synthase subunit a (Pseudarthrobacter chlorophenolicus (strain ATCC 700700 / DSM 12829 / CIP 107037 / JCM 12360 / KCTC 9906 / NCIMB 13794 / A6) (Arthrobacter chlorophenolicus)).